A 128-amino-acid chain; its full sequence is Translation initiation factor 5A (128 aa).

At lysine 35 the chain carries Hypusine.

It belongs to the eIF-5A family.

It is found in the cytoplasm. In terms of biological role, functions by promoting the formation of the first peptide bond. The chain is Translation initiation factor 5A from Methanosarcina barkeri (strain Fusaro / DSM 804).